The following is a 256-amino-acid chain: Type III pantothenate kinase (256 aa).

Asp6 to Val13 serves as a coordination point for ATP. Substrate-binding positions include Tyr100 and Gly107 to Arg110. The Proton acceptor role is filled by Asp109. Asp129 provides a ligand contact to K(+). Thr132 provides a ligand contact to ATP. Thr184 contributes to the substrate binding site.

This sequence belongs to the type III pantothenate kinase family. Homodimer. NH4(+) serves as cofactor. K(+) is required as a cofactor.

Its subcellular location is the cytoplasm. The catalysed reaction is (R)-pantothenate + ATP = (R)-4'-phosphopantothenate + ADP + H(+). Its pathway is cofactor biosynthesis; coenzyme A biosynthesis; CoA from (R)-pantothenate: step 1/5. In terms of biological role, catalyzes the phosphorylation of pantothenate (Pan), the first step in CoA biosynthesis. The chain is Type III pantothenate kinase from Geotalea uraniireducens (strain Rf4) (Geobacter uraniireducens).